Reading from the N-terminus, the 212-residue chain is Hydroxyacylglutathione hydrolase GloC (212 aa).

Residues His-55, His-57, Asp-59, His-60, His-132, Asp-151, and His-192 each contribute to the Zn(2+) site.

Belongs to the metallo-beta-lactamase superfamily. Glyoxalase II family. Zn(2+) serves as cofactor.

It carries out the reaction an S-(2-hydroxyacyl)glutathione + H2O = a 2-hydroxy carboxylate + glutathione + H(+). The enzyme catalyses (R)-S-lactoylglutathione + H2O = (R)-lactate + glutathione + H(+). The protein operates within secondary metabolite metabolism; methylglyoxal degradation; (R)-lactate from methylglyoxal: step 2/2. Functionally, type II glyoxalase, isozyme of GloB, that hydrolyzes (R)-S-lactoylglutathione to (R)-lactate and glutathione. Plays a role in methylglyoxal (MG) detoxification. This chain is Hydroxyacylglutathione hydrolase GloC, found in Haemophilus influenzae (strain ATCC 51907 / DSM 11121 / KW20 / Rd).